The following is a 171-amino-acid chain: Large ribosomal subunit protein uL10 (171 aa).

It belongs to the universal ribosomal protein uL10 family. Part of the ribosomal stalk of the 50S ribosomal subunit. The N-terminus interacts with L11 and the large rRNA to form the base of the stalk. The C-terminus forms an elongated spine to which L12 dimers bind in a sequential fashion forming a multimeric L10(L12)X complex.

Forms part of the ribosomal stalk, playing a central role in the interaction of the ribosome with GTP-bound translation factors. This is Large ribosomal subunit protein uL10 from Lactococcus lactis subsp. cremoris (strain SK11).